Here is a 161-residue protein sequence, read N- to C-terminus: Effector CFEM5 (161 aa).

A signal peptide spans 1 to 23 (MFSLTKSVLFTSIVAIAAQATTA). One can recognise a CFEM domain in the interval 24–126 (VSSPTQTSLP…KVLDAVVASA (103 aa)). Disulfide bonds link C46–C78, C56–C63, and C65–C100. D60 contributes to the heme binding site.

It belongs to the RBT5 family. As to quaternary structure, interacts with Z.mays LRR5; the interaction is direct. Interacts with Z.mays WAK17 isoform 2; the interaction is direct.

The protein resides in the membrane. The protein localises to the secreted. Suppresses host programmed cell death during infection by binding to Z.mays WAK17 isoform 2 and Z.mays LRR5, to prevent activation of Z.mays WAK17 isoform 1 and the downstream hypersensitive response. The chain is Effector CFEM5 from Gibberella zeae (strain ATCC MYA-4620 / CBS 123657 / FGSC 9075 / NRRL 31084 / PH-1) (Wheat head blight fungus).